Here is a 250-residue protein sequence, read N- to C-terminus: tRNA (guanine-N(1)-)-methyltransferase (250 aa).

S-adenosyl-L-methionine contacts are provided by residues Gly116 and 136-141 (IGDYVL).

The protein belongs to the RNA methyltransferase TrmD family. Homodimer.

The protein resides in the cytoplasm. The catalysed reaction is guanosine(37) in tRNA + S-adenosyl-L-methionine = N(1)-methylguanosine(37) in tRNA + S-adenosyl-L-homocysteine + H(+). In terms of biological role, specifically methylates guanosine-37 in various tRNAs. The chain is tRNA (guanine-N(1)-)-methyltransferase from Pseudomonas entomophila (strain L48).